The sequence spans 710 residues: Polyribonucleotide nucleotidyltransferase (710 aa).

Mg(2+)-binding residues include aspartate 489 and aspartate 495. Residues 556-615 enclose the KH domain; the sequence is PKIDTIKIDVDKIKVVIGKGGETIDKIIAETGVKIDIDDEGNVSIYSSDQAAIDRTKEII. Residues 625–693 form the S1 motif domain; that stretch reads GEVYHAKVIR…EKGRVDASMK (69 aa). The tract at residues 691–710 is disordered; that stretch reads SMKALIPRPPKPEKKEEKHD. The span at 700–710 shows a compositional bias: basic and acidic residues; the sequence is PKPEKKEEKHD.

It belongs to the polyribonucleotide nucleotidyltransferase family. Requires Mg(2+) as cofactor.

Its subcellular location is the cytoplasm. The enzyme catalyses RNA(n+1) + phosphate = RNA(n) + a ribonucleoside 5'-diphosphate. Its function is as follows. Involved in mRNA degradation. Catalyzes the phosphorolysis of single-stranded polyribonucleotides processively in the 3'- to 5'-direction. The sequence is that of Polyribonucleotide nucleotidyltransferase from Streptococcus pyogenes serotype M18 (strain MGAS8232).